Reading from the N-terminus, the 270-residue chain is Formamidopyrimidine-DNA glycosylase (270 aa).

P2 (schiff-base intermediate with DNA) is an active-site residue. The Proton donor role is filled by E3. K58 serves as the catalytic Proton donor; for beta-elimination activity. Residues H91, R109, and R151 each contribute to the DNA site. Residues 236-270 (MVYNRQEEPCRLCGTPIRQIRQGQRSTYYCPLCQP) form an FPG-type zinc finger. The active-site Proton donor; for delta-elimination activity is R260.

Belongs to the FPG family. Monomer. Zn(2+) serves as cofactor.

The catalysed reaction is Hydrolysis of DNA containing ring-opened 7-methylguanine residues, releasing 2,6-diamino-4-hydroxy-5-(N-methyl)formamidopyrimidine.. It carries out the reaction 2'-deoxyribonucleotide-(2'-deoxyribose 5'-phosphate)-2'-deoxyribonucleotide-DNA = a 3'-end 2'-deoxyribonucleotide-(2,3-dehydro-2,3-deoxyribose 5'-phosphate)-DNA + a 5'-end 5'-phospho-2'-deoxyribonucleoside-DNA + H(+). Functionally, involved in base excision repair of DNA damaged by oxidation or by mutagenic agents. Acts as a DNA glycosylase that recognizes and removes damaged bases. Has a preference for oxidized purines, such as 7,8-dihydro-8-oxoguanine (8-oxoG). Has AP (apurinic/apyrimidinic) lyase activity and introduces nicks in the DNA strand. Cleaves the DNA backbone by beta-delta elimination to generate a single-strand break at the site of the removed base with both 3'- and 5'-phosphates. The sequence is that of Formamidopyrimidine-DNA glycosylase from Chromobacterium violaceum (strain ATCC 12472 / DSM 30191 / JCM 1249 / CCUG 213 / NBRC 12614 / NCIMB 9131 / NCTC 9757 / MK).